The chain runs to 355 residues: tRNA uridine(34) hydroxylase (355 aa).

The Rhodanese domain maps to 146 to 240 (KDPDALFVDM…YVRTAKKKDL (95 aa)). Cys200 (cysteine persulfide intermediate) is an active-site residue.

This sequence belongs to the TrhO family.

It catalyses the reaction uridine(34) in tRNA + AH2 + O2 = 5-hydroxyuridine(34) in tRNA + A + H2O. In terms of biological role, catalyzes oxygen-dependent 5-hydroxyuridine (ho5U) modification at position 34 in tRNAs. The sequence is that of tRNA uridine(34) hydroxylase from Hamiltonella defensa subsp. Acyrthosiphon pisum (strain 5AT).